The primary structure comprises 85 residues: MNTVTDETHAISVNQLRAFIERIERLEEEKKTISDDIKEVYAELKGSGFDSKAVRSIIRLRKKEEHERMEEEAIIQLYKDALGMS.

It belongs to the UPF0335 family.

The chain is UPF0335 protein BH15140 from Bartonella henselae (strain ATCC 49882 / DSM 28221 / CCUG 30454 / Houston 1) (Rochalimaea henselae).